Consider the following 380-residue polypeptide: Protein Wnt-5a (380 aa).

Positions 1–35 are cleaved as a signal peptide; sequence MKKSIGILSPGVALGTAGSAMSSKFFVMALAVFFS. The propeptide occupies 36 to 61; sequence FAQVVIEANSWWSLGMNNPVQMSEVY. A disulfide bridge links cysteine 104 with cysteine 115. N-linked (GlcNAc...) asparagine glycans are attached at residues asparagine 114 and asparagine 120. 10 disulfide bridges follow: cysteine 154-cysteine 162, cysteine 164-cysteine 182, cysteine 238-cysteine 252, cysteine 240-cysteine 247, cysteine 309-cysteine 340, cysteine 325-cysteine 335, cysteine 339-cysteine 379, cysteine 355-cysteine 370, cysteine 357-cysteine 367, and cysteine 362-cysteine 363. The O-palmitoleoyl serine; by PORCN moiety is linked to residue serine 244. N-linked (GlcNAc...) asparagine glycosylation is found at asparagine 312 and asparagine 326.

It belongs to the Wnt family. Forms a soluble 1:1 complex with AFM; this prevents oligomerization and is required for prolonged biological activity. The complex with AFM may represent the physiological form in body fluids. Homooligomer; disulfide-linked, leading to inactivation (in vitro). Interacts with PORCN. Interacts with WLS. Interacts with glypican GCP3. Interacts with PKD1 (via extracellular domain). Interacts with TMEM67. In terms of processing, glycosylation is necessary for secretion but not for activity. Post-translationally, palmitoleoylation is required for efficient binding to frizzled receptors. Depalmitoleoylation leads to Wnt signaling pathway inhibition. Proteolytic processing by TIKI1 and TIKI2 promotes oxidation and formation of large disulfide-bond oligomers, leading to inactivation of WNT5A.

Its subcellular location is the secreted. It is found in the extracellular space. The protein resides in the extracellular matrix. Functionally, ligand for members of the frizzled family of seven transmembrane receptors. Can activate or inhibit canonical Wnt signaling, depending on receptor context. In the presence of FZD4, activates beta-catenin signaling. In the presence of ROR2, inhibits the canonical Wnt pathway by promoting beta-catenin degradation through a GSK3-independent pathway which involves down-regulation of beta-catenin-induced reporter gene expression. Suppression of the canonical pathway allows chondrogenesis to occur. Inhibits tumor formation. Stimulates cell migration. Decreases proliferation, migration, invasiveness and clonogenicity of carcinoma cells and may act as a tumor suppressor. Mediates motility of melanoma cells. Required during embryogenesis for extension of the primary anterior-posterior axis and for outgrowth of limbs and the genital tubercle. Inhibits type II collagen expression in chondrocytes. This is Protein Wnt-5a from Oryctolagus cuniculus (Rabbit).